A 92-amino-acid polypeptide reads, in one-letter code: Small ribosomal subunit protein uS19 (92 aa).

Belongs to the universal ribosomal protein uS19 family.

Protein S19 forms a complex with S13 that binds strongly to the 16S ribosomal RNA. The sequence is that of Small ribosomal subunit protein uS19 from Albidiferax ferrireducens (strain ATCC BAA-621 / DSM 15236 / T118) (Rhodoferax ferrireducens).